The chain runs to 400 residues: Nicotinate phosphoribosyltransferase (400 aa).

His220 carries the phosphohistidine; by autocatalysis modification.

The protein belongs to the NAPRTase family. Transiently phosphorylated on a His residue during the reaction cycle. Phosphorylation strongly increases the affinity for substrates and increases the rate of nicotinate D-ribonucleotide production. Dephosphorylation regenerates the low-affinity form of the enzyme, leading to product release.

It carries out the reaction nicotinate + 5-phospho-alpha-D-ribose 1-diphosphate + ATP + H2O = nicotinate beta-D-ribonucleotide + ADP + phosphate + diphosphate. The protein operates within cofactor biosynthesis; NAD(+) biosynthesis; nicotinate D-ribonucleotide from nicotinate: step 1/1. Its function is as follows. Catalyzes the synthesis of beta-nicotinate D-ribonucleotide from nicotinate and 5-phospho-D-ribose 1-phosphate at the expense of ATP. The polypeptide is Nicotinate phosphoribosyltransferase (Escherichia coli O45:K1 (strain S88 / ExPEC)).